A 427-amino-acid chain; its full sequence is MSTSFENKATNRGVITFTISQDKIKLALDKAFNKIKKDLNAPGFRKGHMPRPVFNQKFGEEVLYEDALNIVLPEAYEAAVTELGLDVVAQPKIDVVSMEKGKEWTLSAEVVTKPEVKLGDYKNLVVEVDASKEVSDEDVDAKIERERQNLAELIIKDGEAAQGDTVVIDFVGSVDGVEFDGGKGDNFSLELGSGQFIPGFEDQLVGAKAGDEVEVNVTFPESYQAEDLAGKAAKFMTTIHEVKTKEVPELDDELAKDIDEDVDTLEDLKVKYRKELEAAQETAYDDAVEGAAIELAVANAEIVDLPEEMIHEEVNRSVNEFMGNMQRQGISPEMYFQLTGTTQEDLHNQYSAEADKRVKTNLVIEAIAKAEGFEATDSEIEQEINDLATEYNMPADQVRSLLSADMLKHDIAMKKAVEVITSTASVK.

The region spanning 163–248 (GDTVVIDFVG…IHEVKTKEVP (86 aa)) is the PPIase FKBP-type domain.

The protein belongs to the FKBP-type PPIase family. Tig subfamily.

Its subcellular location is the cytoplasm. It carries out the reaction [protein]-peptidylproline (omega=180) = [protein]-peptidylproline (omega=0). Involved in protein export. Acts as a chaperone by maintaining the newly synthesized protein in an open conformation. Functions as a peptidyl-prolyl cis-trans isomerase. This is Trigger factor from Streptococcus pyogenes serotype M18 (strain MGAS8232).